The chain runs to 318 residues: Death effector domain-containing protein (318 aa).

The region spanning 25 to 103 (SLHRMFDIVG…RHDLLPYVTL (79 aa)) is the DED domain. The interval 128–191 (PRALSDPEPR…SVTPDPKEKQ (64 aa)) is disordered.

Interacts with CASP8, CASP10, KRT8, KRT18, CASP3 and FADD. Homodimerizes and heterodimerizes with DEDD2. Exists predominantly in a mono- or diubiquitinated form. As to expression, widely expressed with highest levels in testis. Within the testis, highly expressed in germ cells but not expressed in Sertoli cells.

It localises to the cytoplasm. The protein localises to the nucleus. Its subcellular location is the nucleolus. A scaffold protein that directs CASP3 to certain substrates and facilitates their ordered degradation during apoptosis. May also play a role in mediating CASP3 cleavage of KRT18. Regulates degradation of intermediate filaments during apoptosis. May play a role in the general transcription machinery in the nucleus and might be an important regulator of the activity of GTF3C3. Inhibits DNA transcription in vitro. This is Death effector domain-containing protein (Dedd) from Rattus norvegicus (Rat).